The following is a 103-amino-acid chain: Large ribosomal subunit protein bL21 (103 aa).

The protein belongs to the bacterial ribosomal protein bL21 family. As to quaternary structure, part of the 50S ribosomal subunit. Contacts protein L20.

Its function is as follows. This protein binds to 23S rRNA in the presence of protein L20. The polypeptide is Large ribosomal subunit protein bL21 (Albidiferax ferrireducens (strain ATCC BAA-621 / DSM 15236 / T118) (Rhodoferax ferrireducens)).